Reading from the N-terminus, the 381-residue chain is Alkanesulfonate monooxygenase (381 aa).

The protein belongs to the SsuD family. As to quaternary structure, homotetramer.

It carries out the reaction an alkanesulfonate + FMNH2 + O2 = an aldehyde + FMN + sulfite + H2O + 2 H(+). Functionally, catalyzes the desulfonation of aliphatic sulfonates. The sequence is that of Alkanesulfonate monooxygenase from Escherichia fergusonii (strain ATCC 35469 / DSM 13698 / CCUG 18766 / IAM 14443 / JCM 21226 / LMG 7866 / NBRC 102419 / NCTC 12128 / CDC 0568-73).